A 100-amino-acid chain; its full sequence is Large ribosomal subunit protein uL23 (100 aa).

The protein belongs to the universal ribosomal protein uL23 family. Part of the 50S ribosomal subunit. Contacts protein L29, and trigger factor when it is bound to the ribosome.

In terms of biological role, one of the early assembly proteins it binds 23S rRNA. One of the proteins that surrounds the polypeptide exit tunnel on the outside of the ribosome. Forms the main docking site for trigger factor binding to the ribosome. This Pasteurella multocida (strain Pm70) protein is Large ribosomal subunit protein uL23.